A 79-amino-acid polypeptide reads, in one-letter code: Small polypeptide DEVIL 8 (79 aa).

The span at 1 to 12 (MSRLRNSAQLQL) shows a compositional bias: polar residues. Residues 1-37 (MSRLRNSAQLQLSKKESLGDNGGALNTTRSSRQKQGK) form a disordered region. A glycan (N-linked (GlcNAc...) asparagine) is linked at Asn-26. The tract at residues 39-70 (GFTRKCGRLVKEQRARFYIMRRCVVMLICWTD) is required for DVL/RTFL small polypeptide activity. Residues 55–71 (FYIMRRCVVMLICWTDH) traverse the membrane as a helical segment. N-linked (GlcNAc...) asparagine glycosylation is present at Asn-74.

It belongs to the DVL/RTFL small polypeptides family.

Its subcellular location is the cell membrane. In terms of biological role, small polypeptide acting as a regulatory molecule which coordinates cellular responses required for differentiation, growth and development, probably by restricting polar cell proliferation in lateral organs and coordinating socket cell recruitment and differentiation at trichome sites. The polypeptide is Small polypeptide DEVIL 8 (Arabidopsis thaliana (Mouse-ear cress)).